Consider the following 156-residue polypeptide: Small ribosomal subunit protein uS7c (156 aa).

Belongs to the universal ribosomal protein uS7 family. Part of the 30S ribosomal subunit.

Its subcellular location is the plastid. The protein resides in the chloroplast. One of the primary rRNA binding proteins, it binds directly to 16S rRNA where it nucleates assembly of the head domain of the 30S subunit. The chain is Small ribosomal subunit protein uS7c (rps7) from Cyanidium caldarium (Red alga).